The primary structure comprises 288 residues: Probable prolyl 4-hydroxylase 9 (288 aa).

Over 1–12 (MKSRLKSYRRKK) the chain is Cytoplasmic. A helical; Signal-anchor for type II membrane protein transmembrane segment spans residues 13–33 (LGLATVIVFCSLCFLFGFYGS). The Lumenal portion of the chain corresponds to 34-288 (TLLSQNVPRV…KWIRDQDQEE (255 aa)). Residues 164–283 (HGESFNILRY…KWVATKWIRD (120 aa)) enclose the Fe2OG dioxygenase domain. Fe cation contacts are provided by H182 and D184. N221 and N255 each carry an N-linked (GlcNAc...) asparagine glycan. A Fe cation-binding site is contributed by H264. K274 is a binding site for 2-oxoglutarate.

It belongs to the P4HA family. Requires Fe(2+) as cofactor. L-ascorbate serves as cofactor.

Its subcellular location is the endoplasmic reticulum membrane. The protein resides in the golgi apparatus. The catalysed reaction is L-prolyl-[collagen] + 2-oxoglutarate + O2 = trans-4-hydroxy-L-prolyl-[collagen] + succinate + CO2. Functionally, catalyzes the post-translational formation of 4-hydroxyproline in -Xaa-Pro-Gly- sequences in proline-rich peptide sequences of plant glycoproteins and other proteins. Hydroxyprolines are important constituent of many plant cell wall glycoproteins such as extensins, hydroxyproline-rich glycoproteins, lectins and arabinogalactan proteins. In Arabidopsis thaliana (Mouse-ear cress), this protein is Probable prolyl 4-hydroxylase 9.